Consider the following 858-residue polypeptide: MGKKRIYELAKELNVPSKQLIAQAQQLGFSVKNHMSTLGDSEARQLQGTTTVTHPKSQPAPAKTSRATQAVAKNVTRTANQQQSNSRHQQSGDYLNNNRNNNQNNSQSRNSNGNRSNNGGNRTNSNNGNRSANASRSNSARNNGGSNTNRSNNNNNNNRSNNNNRSNTSNNRTNSTGNRTNNGGQNRNNNRTTTNNNNNNSNRSNGSNNSSRNGSGRFGGSLNSNNNGGGRYRGGNNNNRRRNNRNNKSRNNKNQRIRQVNNKPAPVRKDKPLPETLVYTVGMNAQDLGKLLHREPAEIIKKLFMLGVAVNQNQSLDKDTIEILATDYGINAQEKVQVDVTDLDKFFDDEVNNTDNLAPRAPVVTVMGHVDHGKTTLLDQLRHTHVTEGEAGGITQAIGAYQVKHDGKVITFLDTPGHAAFTEMRARGADITDITVLVVAADDGVMPQTIEAINHAKAAKVPIIVAVNKIDKPGANPNHVMEQLTEYGLIPEDWGGDTIFVQISAKFGKNLDELLDMILLQSEVLELTANPKQNAAGSVLEASLDRGKGSTATLLVQQGTMHVGDPIVVGNTYGKVRTMTNDHGKRIKEAVPSTPIEITGLNDVPDAGDRFVVFDDEKTARDAGEQRAKQALMEERKQTAHVTLDNLFDSMKQGELKEVDVIIKADVQGSVEALAGSLRKIDVEGVRVNIIHTAVGAINESDVALAEASNAIIIGFNVRPTPQAKAQADTDDVDIRLHQVIYNAIDEIESAMKGMLEPTYKEEITGQAEIREIYKVSKIGTIGGGMVTDGVIHRDSGVRVIRDGVVIYDGKLASLRRFKDDVKEVKQGFELGLRIEDYNDIKVNDVIEAYVMKEVPVE.

The segment at Thr-49 to Lys-271 is disordered. Over residues Asn-80–Asn-226 the composition is skewed to low complexity. Residues Asn-239–Arg-256 show a composition bias toward basic residues. One can recognise a tr-type G domain in the interval Pro-359–Thr-528. The interval Gly-368 to Thr-375 is G1. Gly-368 to Thr-375 contributes to the GTP binding site. The segment at Gly-393–Ala-397 is G2. Residues Asp-414–Gly-417 form a G3 region. GTP contacts are provided by residues Asp-414–His-418 and Asn-468–Asp-471. A G4 region spans residues Asn-468–Asp-471. Residues Ser-504–Lys-506 form a G5 region.

Belongs to the TRAFAC class translation factor GTPase superfamily. Classic translation factor GTPase family. IF-2 subfamily.

The protein localises to the cytoplasm. One of the essential components for the initiation of protein synthesis. Protects formylmethionyl-tRNA from spontaneous hydrolysis and promotes its binding to the 30S ribosomal subunits. Also involved in the hydrolysis of GTP during the formation of the 70S ribosomal complex. The sequence is that of Translation initiation factor IF-2 from Lactiplantibacillus plantarum (strain ATCC BAA-793 / NCIMB 8826 / WCFS1) (Lactobacillus plantarum).